Consider the following 1104-residue polypeptide: A disintegrin and metalloproteinase with thrombospondin motifs 10 (1104 aa).

Positions 1 to 25 (MASACQILRWALALGLGLTFKVTHA) are cleaved as a signal peptide. The propeptide occupies 26–233 (FRSQDELLSS…SERGQLGLKR (208 aa)). 2 N-linked (GlcNAc...) asparagine glycosylation sites follow: asparagine 90 and asparagine 222. The region spanning 239–457 (RYVETLVVAD…GLGLCLNNRP (219 aa)) is the Peptidase M12B domain. Disulfide bonds link cysteine 315–cysteine 376, cysteine 351–cysteine 358, cysteine 370–cysteine 452, cysteine 409–cysteine 436, cysteine 479–cysteine 501, cysteine 490–cysteine 508, cysteine 496–cysteine 531, cysteine 521–cysteine 536, cysteine 559–cysteine 596, cysteine 563–cysteine 601, and cysteine 574–cysteine 586. Zn(2+) is bound at residue histidine 392. The active site involves glutamate 393. Zn(2+)-binding residues include histidine 396 and histidine 402. The 87-residue stretch at 460-546 (QDFVYPTVAP…VPFGSRPEGV (87 aa)) folds into the Disintegrin domain. A TSP type-1 1 domain is found at 547–602 (DGAWGPWTPWGDCSRSCGGGVSSSSRHCDSPRPTIGGKYCLGERRRHRSCNTNDCP). The tract at residues 706 to 818 (ETIEGVFSPA…PALHYRFNAP (113 aa)) is spacer. N-linked (GlcNAc...) asparagine glycosylation is found at asparagine 740 and asparagine 795. TSP type-1 domains lie at 825 to 885 (PPYS…EPCP), 888 to 943 (WVVG…QGPM), 944 to 1003 (CPPE…RRCP), and 1004 to 1058 (PARW…AKCD). Cystine bridges form between cysteine 837–cysteine 879, cysteine 841–cysteine 884, and cysteine 852–cysteine 866. A glycan (N-linked (GlcNAc...) asparagine) is linked at asparagine 892. Positions 1066-1104 (GPEECKDVNKVAYCPLVLKFQFCSRAYFRQMCCKTCQGR) constitute a PLAC domain.

As to quaternary structure, interacts with FBN1; this interaction promotes microfibrils assembly. Zn(2+) serves as cofactor. Glycosylated. Can be O-fucosylated by POFUT2 on a serine or a threonine residue found within the consensus sequence C1-X(2)-(S/T)-C2-G of the TSP type-1 repeat domains where C1 and C2 are the first and second cysteine residue of the repeat, respectively. Fucosylated repeats can then be further glycosylated by the addition of a beta-1,3-glucose residue by the glucosyltransferase, B3GALTL. Fucosylation mediates the efficient secretion of ADAMTS family members. Can also be C-glycosylated with one or two mannose molecules on tryptophan residues within the consensus sequence W-X-X-W of the TPRs, and N-glycosylated. These other glycosylations can also facilitate secretion. As to expression, widely expressed in adult tissues.

It localises to the secreted. Its subcellular location is the extracellular space. It is found in the extracellular matrix. Its function is as follows. Metalloprotease that participate in microfibrils assembly. Microfibrils are extracellular matrix components occurring independently or along with elastin in the formation of elastic tissues. The protein is A disintegrin and metalloproteinase with thrombospondin motifs 10 (Adamts10) of Mus musculus (Mouse).